Reading from the N-terminus, the 225-residue chain is UPF0758 protein AZOSEA04420 (225 aa).

Residues V102–L225 enclose the MPN domain. Zn(2+)-binding residues include H173, H175, and D186. Positions H173–D186 match the JAMM motif motif.

It belongs to the UPF0758 family.

This chain is UPF0758 protein AZOSEA04420, found in Aromatoleum aromaticum (strain DSM 19018 / LMG 30748 / EbN1) (Azoarcus sp. (strain EbN1)).